Here is a 203-residue protein sequence, read N- to C-terminus: Recombination protein RecR (203 aa).

The segment at 56-71 (CEVCGNVSDADRCRIC) adopts a C4-type zinc-finger fold. The Toprim domain occupies 79–179 (SLVCVVEEPK…TVTRIASGLP (101 aa)).

This sequence belongs to the RecR family.

In terms of biological role, may play a role in DNA repair. It seems to be involved in an RecBC-independent recombinational process of DNA repair. It may act with RecF and RecO. The polypeptide is Recombination protein RecR (Mycobacterium sp. (strain JLS)).